Consider the following 280-residue polypeptide: Transcription factor MYB60 (280 aa).

2 consecutive HTH myb-type domains span residues lysine 9–isoleucine 65 and lysine 66–leucine 116. 2 DNA-binding regions (H-T-H motif) span residues tryptophan 37–leucine 61 and tryptophan 89–leucine 112. Residues cysteine 49 and cysteine 53 each carry the S-nitrosocysteine modification. Positions lysine 118–serine 127 are enriched in basic and acidic residues. 2 disordered regions span residues lysine 118–serine 149 and glutamate 204–proline 247. Residues glutamate 128–serine 149 show a composition bias toward polar residues.

As to expression, specifically expressed in guard cells. Present in seedlings, leaves, stems and flowers.

It is found in the nucleus. In terms of biological role, transcription factor involved in the regulation of gene (e.g. drought-regulated and flavonoid biosynthetic genes) expression and stomatal movements leading to negative regulation of responses to drought and responses to other physiological stimuli (e.g. light). Promotes guard cell deflation in response to water deficit. Triggers root growth upon osmotic stress (e.g. mannitol containing medium). The chain is Transcription factor MYB60 from Arabidopsis thaliana (Mouse-ear cress).